The chain runs to 378 residues: Putative methyltransferase spot-1 (378 aa).

It belongs to the class IV-like SAM-binding methyltransferase superfamily.

Its subcellular location is the cytoplasm. The protein resides in the cytoskeleton. It is found in the spindle. It localises to the chromosome. The protein localises to the centromere. Its subcellular location is the kinetochore. The protein resides in the microtubule organizing center. It is found in the centrosome. Required for association of the centrosomes with the poles of the bipolar mitotic spindle during metaphase. This Caenorhabditis elegans protein is Putative methyltransferase spot-1.